Reading from the N-terminus, the 117-residue chain is Modulator protein MzrA (117 aa).

The Cytoplasmic portion of the chain corresponds to 1-9 (MNSPGLRKP). Residues 10 to 29 (TIWRPLLLLFPLLALLLSMS) form a helical membrane-spanning segment. The Periplasmic segment spans residues 30–117 (SPRLPDEVML…THGTIRVARS (88 aa)).

This sequence belongs to the MzrA family. Interacts with EnvZ.

Its subcellular location is the cell inner membrane. Modulates the activity of the EnvZ/OmpR two-component regulatory system, probably by directly modulating EnvZ enzymatic activity and increasing stability of phosphorylated OmpR. The polypeptide is Modulator protein MzrA (Dickeya zeae (strain Ech586) (Dickeya dadantii (strain Ech586))).